Here is a 94-residue protein sequence, read N- to C-terminus: Citrate lyase acyl carrier protein (94 aa).

O-(phosphoribosyl dephospho-coenzyme A)serine is present on serine 14.

This sequence belongs to the CitD family. As to quaternary structure, oligomer with a subunit composition of (alpha,beta,gamma)6.

Its subcellular location is the cytoplasm. Covalent carrier of the coenzyme of citrate lyase. In Fusobacterium nucleatum subsp. nucleatum (strain ATCC 25586 / DSM 15643 / BCRC 10681 / CIP 101130 / JCM 8532 / KCTC 2640 / LMG 13131 / VPI 4355), this protein is Citrate lyase acyl carrier protein.